Consider the following 239-residue polypeptide: VIGGQECARDSHPWQAAVYYYSDIKCGGVLVDPQWVLTAAHCINDSNQVKLGRHNLFEDEDTAQHFLVSQSVPHPDFNMSLLEPHNVLPNEDYSHDLMLLRLNQPAQITDSVQVMPLPTQEVQVGTTCRALGWGSIDPDPAHPVFPDELQCVGLEILPSKNCDDAHIANVTGTMLCAGDLAGGKDTCVGDSGGPLICDGVLQGLTSWGDSPCGVAHSPSLYTKVIEYREWIERTMADNP.

The Peptidase S1 domain occupies 1–236 (VIGGQECARD…YREWIERTMA (236 aa)). 5 cysteine pairs are disulfide-bonded: C7/C151, C26/C42, C128/C197, C162/C176, and C187/C212. H41 (charge relay system) is an active-site residue. N-linked (GlcNAc...) asparagine glycosylation is present at N78. D96 (charge relay system) is an active-site residue. The N-linked (GlcNAc...) asparagine glycan is linked to N169. S191 (charge relay system) is an active-site residue.

Belongs to the peptidase S1 family. Kallikrein subfamily.

The enzyme catalyses Preferential cleavage of Arg-|-Xaa bonds in small molecule substrates. Highly selective action to release kallidin (lysyl-bradykinin) from kininogen involves hydrolysis of Met-|-Xaa or Leu-|-Xaa.. Its function is as follows. Glandular kallikreins cleave Met-Lys and Arg-Ser bonds in kininogen to release Lys-bradykinin. The sequence is that of Glandular kallikrein, prostatic from Cavia porcellus (Guinea pig).